The primary structure comprises 185 residues: Potassium-transporting ATPase KdpC subunit (185 aa).

A helical membrane pass occupies residues 11-31 (LALLMTLVTGALYPLAVTGIA).

It belongs to the KdpC family. The system is composed of three essential subunits: KdpA, KdpB and KdpC.

The protein localises to the cell inner membrane. Part of the high-affinity ATP-driven potassium transport (or Kdp) system, which catalyzes the hydrolysis of ATP coupled with the electrogenic transport of potassium into the cytoplasm. This subunit acts as a catalytic chaperone that increases the ATP-binding affinity of the ATP-hydrolyzing subunit KdpB by the formation of a transient KdpB/KdpC/ATP ternary complex. This chain is Potassium-transporting ATPase KdpC subunit, found in Pseudomonas putida (strain ATCC 47054 / DSM 6125 / CFBP 8728 / NCIMB 11950 / KT2440).